A 1406-amino-acid chain; its full sequence is DNA-directed RNA polymerase subunit beta' (1406 aa).

Residues cysteine 70, cysteine 72, cysteine 85, and cysteine 88 each contribute to the Zn(2+) site. Mg(2+)-binding residues include aspartate 460, aspartate 462, and aspartate 464. Residues cysteine 814, cysteine 889, cysteine 896, and cysteine 899 each contribute to the Zn(2+) site.

This sequence belongs to the RNA polymerase beta' chain family. The RNAP catalytic core consists of 2 alpha, 1 beta, 1 beta' and 1 omega subunit. When a sigma factor is associated with the core the holoenzyme is formed, which can initiate transcription. The cofactor is Mg(2+). Zn(2+) is required as a cofactor.

The catalysed reaction is RNA(n) + a ribonucleoside 5'-triphosphate = RNA(n+1) + diphosphate. DNA-dependent RNA polymerase catalyzes the transcription of DNA into RNA using the four ribonucleoside triphosphates as substrates. The chain is DNA-directed RNA polymerase subunit beta' from Stenotrophomonas maltophilia (strain K279a).